Reading from the N-terminus, the 1379-residue chain is DNA-directed RNA polymerase subunit beta'' (1379 aa).

Positions 220, 293, 300, and 303 each coordinate Zn(2+).

It belongs to the RNA polymerase beta' chain family. RpoC2 subfamily. In plastids the minimal PEP RNA polymerase catalytic core is composed of four subunits: alpha, beta, beta', and beta''. When a (nuclear-encoded) sigma factor is associated with the core the holoenzyme is formed, which can initiate transcription. The cofactor is Zn(2+).

The protein resides in the plastid. The protein localises to the chloroplast. It catalyses the reaction RNA(n) + a ribonucleoside 5'-triphosphate = RNA(n+1) + diphosphate. Its function is as follows. DNA-dependent RNA polymerase catalyzes the transcription of DNA into RNA using the four ribonucleoside triphosphates as substrates. The sequence is that of DNA-directed RNA polymerase subunit beta'' from Nasturtium officinale (Watercress).